Consider the following 422-residue polypeptide: Signal recognition particle receptor FtsY (422 aa).

Residues 39–86 (PERGVVDRSGGYTASSGITFSQTPTTQPAERIDTSGLPAVGDDATVPR) form a disordered region. Residues 50–66 (YTASSGITFSQTPTTQP) are compositionally biased toward polar residues. GTP contacts are provided by residues 230–237 (GVNGTGKT), 312–316 (DTAGR), and 374–377 (TKLD).

The protein belongs to the GTP-binding SRP family. FtsY subfamily. Part of the signal recognition particle protein translocation system, which is composed of SRP and FtsY.

It is found in the cell membrane. The protein resides in the cytoplasm. The catalysed reaction is GTP + H2O = GDP + phosphate + H(+). Its function is as follows. Involved in targeting and insertion of nascent membrane proteins into the cytoplasmic membrane. Acts as a receptor for the complex formed by the signal recognition particle (SRP) and the ribosome-nascent chain (RNC). In Mycobacterium bovis (strain ATCC BAA-935 / AF2122/97), this protein is Signal recognition particle receptor FtsY.